Reading from the N-terminus, the 154-residue chain is 6,7-dimethyl-8-ribityllumazine synthase (154 aa).

Residues phenylalanine 22, 56 to 58 (AFE), and 80 to 82 (AVI) each bind 5-amino-6-(D-ribitylamino)uracil. Residue 85 to 86 (AT) coordinates (2S)-2-hydroxy-3-oxobutyl phosphate. Histidine 88 (proton donor) is an active-site residue. Phenylalanine 113 is a 5-amino-6-(D-ribitylamino)uracil binding site. Arginine 127 lines the (2S)-2-hydroxy-3-oxobutyl phosphate pocket.

The protein belongs to the DMRL synthase family. In terms of assembly, forms an icosahedral capsid composed of 60 subunits, arranged as a dodecamer of pentamers.

The enzyme catalyses (2S)-2-hydroxy-3-oxobutyl phosphate + 5-amino-6-(D-ribitylamino)uracil = 6,7-dimethyl-8-(1-D-ribityl)lumazine + phosphate + 2 H2O + H(+). The protein operates within cofactor biosynthesis; riboflavin biosynthesis; riboflavin from 2-hydroxy-3-oxobutyl phosphate and 5-amino-6-(D-ribitylamino)uracil: step 1/2. Its function is as follows. Catalyzes the formation of 6,7-dimethyl-8-ribityllumazine by condensation of 5-amino-6-(D-ribitylamino)uracil with 3,4-dihydroxy-2-butanone 4-phosphate. This is the penultimate step in the biosynthesis of riboflavin. The chain is 6,7-dimethyl-8-ribityllumazine synthase from Geobacillus sp. (strain WCH70).